The primary structure comprises 286 residues: Beta-lactamase TEM (286 aa).

Residues 1–23 form the signal peptide; it reads MSIQHFRVALIPFFAAFCLPVFA. The active-site Acyl-ester intermediate is S68. Cysteines 75 and 121 form a disulfide. E166 acts as the Proton acceptor in catalysis. 232-234 contacts substrate; that stretch reads KSG.

It belongs to the class-A beta-lactamase family.

It catalyses the reaction a beta-lactam + H2O = a substituted beta-amino acid. In terms of biological role, TEM-type are the most prevalent beta-lactamases in enterobacteria; they hydrolyze the beta-lactam bond in susceptible beta-lactam antibiotics, thus conferring resistance to penicillins and cephalosporins. TEM-3 and TEM-4 are capable of hydrolyzing cefotaxime and ceftazidime. TEM-5 is capable of hydrolyzing ceftazidime. TEM-6 is capable of hydrolyzing ceftazidime and aztreonam. TEM-8/CAZ-2, TEM-16/CAZ-7 and TEM-24/CAZ-6 are markedly active against ceftazidime. IRT-4 shows resistance to beta-lactamase inhibitors. This Escherichia coli protein is Beta-lactamase TEM (bla).